A 155-amino-acid chain; its full sequence is Putative pre-16S rRNA nuclease (155 aa).

Belongs to the YqgF nuclease family.

Its subcellular location is the cytoplasm. In terms of biological role, could be a nuclease involved in processing of the 5'-end of pre-16S rRNA. The sequence is that of Putative pre-16S rRNA nuclease from Xanthomonas campestris pv. campestris (strain B100).